We begin with the raw amino-acid sequence, 302 residues long: Putative S-adenosyl-L-methionine-dependent methyltransferase MRA_0290 (302 aa).

S-adenosyl-L-methionine contacts are provided by residues Asp126 and 155–156 (DL).

This sequence belongs to the UPF0677 family.

Exhibits S-adenosyl-L-methionine-dependent methyltransferase activity. The protein is Putative S-adenosyl-L-methionine-dependent methyltransferase MRA_0290 of Mycobacterium tuberculosis (strain ATCC 25177 / H37Ra).